Here is a 609-residue protein sequence, read N- to C-terminus: UvrABC system protein C (609 aa).

Residues 19-97 (ASPGCYLWKS…IKKHNPRFNV (79 aa)) form the GIY-YIG domain. The UVR domain occupies 208–243 (ESLVSDLNIKMSNASERLDFEKAARYRDMLQRIQNF).

The protein belongs to the UvrC family. In terms of assembly, interacts with UvrB in an incision complex.

Its subcellular location is the cytoplasm. Its function is as follows. The UvrABC repair system catalyzes the recognition and processing of DNA lesions. UvrC both incises the 5' and 3' sides of the lesion. The N-terminal half is responsible for the 3' incision and the C-terminal half is responsible for the 5' incision. The polypeptide is UvrABC system protein C (Leptospira interrogans serogroup Icterohaemorrhagiae serovar copenhageni (strain Fiocruz L1-130)).